Here is a 571-residue protein sequence, read N- to C-terminus: Proline--tRNA ligase (571 aa).

This sequence belongs to the class-II aminoacyl-tRNA synthetase family. ProS type 1 subfamily. In terms of assembly, homodimer.

It localises to the cytoplasm. It carries out the reaction tRNA(Pro) + L-proline + ATP = L-prolyl-tRNA(Pro) + AMP + diphosphate. Its function is as follows. Catalyzes the attachment of proline to tRNA(Pro) in a two-step reaction: proline is first activated by ATP to form Pro-AMP and then transferred to the acceptor end of tRNA(Pro). As ProRS can inadvertently accommodate and process non-cognate amino acids such as alanine and cysteine, to avoid such errors it has two additional distinct editing activities against alanine. One activity is designated as 'pretransfer' editing and involves the tRNA(Pro)-independent hydrolysis of activated Ala-AMP. The other activity is designated 'posttransfer' editing and involves deacylation of mischarged Ala-tRNA(Pro). The misacylated Cys-tRNA(Pro) is not edited by ProRS. This Stutzerimonas stutzeri (strain A1501) (Pseudomonas stutzeri) protein is Proline--tRNA ligase.